Reading from the N-terminus, the 118-residue chain is Protein Rev (118 aa).

Phosphoserine; by host CK2 is present on Ser5. The tract at residues Leu18 to Asn26 is homomultimerization. The tract at residues Tyr23 to Gln49 is disordered. The Nuclear localization signal and RNA-binding (RRE) motif lies at Thr34–Arg50. The span at Gln36–Gln49 shows a compositional bias: basic residues. Residues Leu73 to Asn84 carry the Nuclear export signal and binding to XPO1 motif. Residues Cys89–Cys118 form a disordered region. Phosphoserine; by host occurs at positions 92 and 99. Residues Ser92–Ser112 show a composition bias toward polar residues.

It belongs to the HIV-1 REV protein family. Homomultimer; when bound to the RRE. Multimeric assembly is essential for activity and may involve XPO1. Binds to human KPNB1, XPO1, TNPO1, RANBP5 and IPO7. Interacts with the viral Integrase. Interacts with human KHDRBS1. Interacts with human NAP1; this interaction decreases Rev multimerization and stimulates its activity. Interacts with human DEAD-box helicases DDX3 and DDX24; these interactions may serve for viral RNA export to the cytoplasm and packaging, respectively. Interacts with human PSIP1; this interaction may inhibit HIV-1 DNA integration by promoting dissociation of the Integrase-LEDGF/p75 complex. Asymmetrically arginine dimethylated at one site by host PRMT6. Methylation impairs the RNA-binding activity and export of viral RNA from the nucleus to the cytoplasm. Post-translationally, phosphorylated by protein kinase CK2. Presence of, and maybe binding to the N-terminus of the regulatory beta subunit of CK2 is necessary for CK2-mediated Rev's phosphorylation.

Its subcellular location is the host nucleus. The protein localises to the host nucleolus. It is found in the host cytoplasm. Functionally, escorts unspliced or incompletely spliced viral pre-mRNAs (late transcripts) out of the nucleus of infected cells. These pre-mRNAs carry a recognition sequence called Rev responsive element (RRE) located in the env gene, that is not present in fully spliced viral mRNAs (early transcripts). This function is essential since most viral proteins are translated from unspliced or partially spliced pre-mRNAs which cannot exit the nucleus by the pathway used by fully processed cellular mRNAs. Rev itself is translated from a fully spliced mRNA that readily exits the nucleus. Rev's nuclear localization signal (NLS) binds directly to KPNB1/Importin beta-1 without previous binding to KPNA1/Importin alpha-1. KPNB1 binds to the GDP bound form of RAN (Ran-GDP) and targets Rev to the nucleus. In the nucleus, the conversion from Ran-GDP to Ran-GTP dissociates Rev from KPNB1 and allows Rev's binding to the RRE in viral pre-mRNAs. Rev multimerization on the RRE via cooperative assembly exposes its nuclear export signal (NES) to the surface. Rev can then form a complex with XPO1/CRM1 and Ran-GTP, leading to nuclear export of the complex. Conversion from Ran-GTP to Ran-GDP mediates dissociation of the Rev/RRE/XPO1/RAN complex, so that Rev can return to the nucleus for a subsequent round of export. Beside KPNB1, also seems to interact with TNPO1/Transportin-1, RANBP5/IPO5 and IPO7/RANBP7 for nuclear import. The nucleoporin-like HRB/RIP is an essential cofactor that probably indirectly interacts with Rev to release HIV RNAs from the perinuclear region to the cytoplasm. This Human immunodeficiency virus type 1 group M subtype D (isolate Z2/CDC-Z34) (HIV-1) protein is Protein Rev.